Here is a 121-residue protein sequence, read N- to C-terminus: Basic phospholipase A2 BmTX-I (121 aa).

Cystine bridges form between C26–C114, C28–C45, C44–C95, C50–C121, C51–C88, C58–C82, and C76–C86. Ca(2+) is bound by residues Y27, G29, and G31. H48 is a catalytic residue. D49 is a Ca(2+) binding site. The active site involves D89.

Ca(2+) is required as a cofactor. In terms of tissue distribution, expressed by the venom gland.

It localises to the secreted. The catalysed reaction is a 1,2-diacyl-sn-glycero-3-phosphocholine + H2O = a 1-acyl-sn-glycero-3-phosphocholine + a fatty acid + H(+). Its activity is regulated as follows. Inhibited by magnesium, cadmium and manganese ions. Also inhibited by crotapotin. Functionally, snake venom phospholipase A2 (PLA2) that shows enzymatic activity in the presence of a synthetic substrate. In vitro, blocks the neuromuscular transmission in young chick biventer cervicis preparations. In mice, induces myonecrosis and a systemic interleukin-6 response upon intramuscular injection. Also induces edema and exerts a strong pro-inflammatory effect. PLA2 catalyzes the calcium-dependent hydrolysis of the 2-acyl groups in 3-sn-phosphoglycerides. In Bothrops moojeni (Lance-headed viper), this protein is Basic phospholipase A2 BmTX-I.